Here is a 317-residue protein sequence, read N- to C-terminus: Ribosomal protein L11 methyltransferase (317 aa).

The S-adenosyl-L-methionine site is built by threonine 162, glycine 183, aspartate 205, and asparagine 248.

This sequence belongs to the methyltransferase superfamily. PrmA family.

It is found in the cytoplasm. The catalysed reaction is L-lysyl-[protein] + 3 S-adenosyl-L-methionine = N(6),N(6),N(6)-trimethyl-L-lysyl-[protein] + 3 S-adenosyl-L-homocysteine + 3 H(+). In terms of biological role, methylates ribosomal protein L11. This is Ribosomal protein L11 methyltransferase from Alkaliphilus metalliredigens (strain QYMF).